The primary structure comprises 490 residues: Lipoprotein lipase (490 aa).

The first 25 residues, 1-25 (MERGRGMGKTALLAVLCLCLRGAAG), serve as a signal peptide directing secretion. The interval 32-53 (MNFEGIESKFSLRTPAEPDEDV) is interaction with GPIHBP1. A disulfide bond links Cys-54 and Cys-67. The N-linked (GlcNAc...) (complex) asparagine glycan is linked to Asn-70. Position 121 is a 3'-nitrotyrosine (Tyr-121). Ser-159 acts as the Nucleophile in catalysis. The active-site Charge relay system is Asp-183. Tyr-191 is modified (3'-nitrotyrosine). Ca(2+) contacts are provided by Ala-194, Arg-197, Ser-199, and Asp-202. Cysteines 243 and 266 form a disulfide. Residues 243 to 266 (CNLGEALRLIAEKGFSDVDQLVKC) form an essential for determining substrate specificity region. His-268 (charge relay system) is an active-site residue. 2 disulfides stabilise this stretch: Cys-291/Cys-310 and Cys-302/Cys-305. Positions 341-464 (FHYQVKIHFF…KGEEAAIFVK (124 aa)) constitute a PLAT domain. The residue at position 343 (Tyr-343) is a 3'-nitrotyrosine. 2 N-linked (GlcNAc...) asparagine glycosylation sites follow: Asn-354 and Asn-386. Residues 417–421 (WSDWW) are important for interaction with lipoprotein particles. The interval 430-434 (RVRVK) is important for heparin binding. 430–441 (RVRVKSGETQKK) is a binding site for heparin. Residues 443-467 (VFCSRDGSSRLGKGEEAAIFVKCLE) form an interaction with GPIHBP1 region. Cys-445 and Cys-465 are oxidised to a cystine. The segment at 471-490 (SRKRGGAKKASKENSAHESA) is disordered. Basic and acidic residues predominate over residues 480-490 (ASKENSAHESA).

The protein belongs to the AB hydrolase superfamily. Lipase family. Homodimer. Interacts with GPIHBP1 with 1:1 stoichiometry. Interacts with APOC2; the interaction activates LPL activity in the presence of lipids. Interaction with heparan sulfate proteoglycans is required to protect LPL against loss of activity. Associates with lipoprotein particles in blood plasma. Interacts with LMF1 and SEL1L; interaction with SEL1L is required to prevent aggregation of newly synthesized LPL in the endoplasmic reticulum (ER), and for normal export of LPL from the ER to the extracellular space. Post-translationally, N-glycan at Asn-70 is a triantennary complex oligosaccharide containing sialic acid, galactose, mannose, and N-acetylglucosamine, the reducing GlcNAc being sulfated at C6. Tyrosine nitration after lipopolysaccharide (LPS) challenge down-regulates the lipase activity.

The protein localises to the cell membrane. It is found in the secreted. Its subcellular location is the extracellular space. The protein resides in the extracellular matrix. It carries out the reaction a triacylglycerol + H2O = a diacylglycerol + a fatty acid + H(+). The enzyme catalyses a 1,2-diacyl-sn-glycero-3-phosphocholine + H2O = a 2-acyl-sn-glycero-3-phosphocholine + a fatty acid + H(+). The catalysed reaction is 1,2,3-tri-(9Z-octadecenoyl)-glycerol + H2O = di-(9Z)-octadecenoylglycerol + (9Z)-octadecenoate + H(+). It catalyses the reaction 1,2-di-(9Z-octadecenoyl)-sn-glycero-3-phosphocholine + H2O = (9Z-octadecenoyl)-sn-glycero-3-phosphocholine + (9Z)-octadecenoate + H(+). It carries out the reaction 1,2,3-tributanoylglycerol + H2O = dibutanoylglycerol + butanoate + H(+). The enzyme catalyses 1,2-dihexadecanoyl-sn-glycero-3-phosphocholine + H2O = hexadecanoyl-sn-glycero-3-phosphocholine + hexadecanoate + H(+). Its activity is regulated as follows. Ca(2+) binding promotes protein stability and formation of the active homodimer. Key enzyme in triglyceride metabolism. Catalyzes the hydrolysis of triglycerides from circulating chylomicrons and very low density lipoproteins (VLDL), and thereby plays an important role in lipid clearance from the blood stream, lipid utilization and storage. Although it has both phospholipase and triglyceride lipase activities it is primarily a triglyceride lipase with low but detectable phospholipase activity. Mediates margination of triglyceride-rich lipoprotein particles in capillaries. Recruited to its site of action on the luminal surface of vascular endothelium by binding to GPIHBP1 and cell surface heparan sulfate proteoglycans. In Gallus gallus (Chicken), this protein is Lipoprotein lipase (LPL).